Reading from the N-terminus, the 617-residue chain is MALVGSRVELDADEDIFEDALETISRSPSDMATSGFHFVPCDTKRTSRQLGAPAVGRAEGSSAKVDLKSGLEECAAALNLFLSNRFKDALELLRPWAKESMYHALGYSTIVVLQAVMTFEQQDIQNGISAMKDALQTCQKYRKKCTVVESFSSLLSRGSLEQLSEEEMHAEICYAECLLQKAALTFVQDENMINFIKGGLKIRTSYQIYKECLSILHVIQKNKEEQHFFYEFEGGVKLGTGAFNLMLSLLPARIIRLLEFIGFSGNRDLGLLQLREGASGSSMRSPLCCLTILAFHTYISLILGTGEVNVAEAESLLAPFLQQFPNGSLILFYHARIELLKGNAEKAQETFRKCISVQEEWKQFHHLCYWELMWIYIYQQNWMQAYYYSDLLCKESKWSKATYVFLKAAILSMLPEEEVAVTKENVVSLFRQVDGLKQRIAGKSLPTEKFAVRKARRYSPSSGVPGKLVLPALEMMYVWNGFSIVGKRKDLSENLLVTVEKAEEALQNQNFTDYSVDDECLVKLLKGCCLKNLQRPLQAELCFNHVLESEKLLKYDHYLVPFTLFELAFLYKSQGEIDKAIKVLETARNNYKDYSLESRLHFRIQAALHLWKKPSSD.

TPR repeat units lie at residues 328–361 (SLILFYHARIELLKGNAEKAQETFRKCISVQEEW) and 561–594 (PFTLFELAFLYKSQGEIDKAIKVLETARNNYKDY).

It belongs to the TTC39 family.

Functionally, regulates high density lipoprotein (HDL) cholesterol metabolism by promoting the ubiquitination and degradation of the oxysterols receptors LXR (NR1H2 and NR1H3). The polypeptide is Tetratricopeptide repeat protein 39B (Ttc39b) (Rattus norvegicus (Rat)).